The following is a 502-amino-acid chain: Glutamate dehydrogenase, mitochondrial (502 aa).

96–98 (HHR) serves as a coordination point for NAD(+). 2 residues coordinate substrate: Lys-102 and Lys-126. Asp-131 provides a ligand contact to NAD(+). Residue Lys-138 is part of the active site. Ser-394 lines the substrate pocket.

Belongs to the Glu/Leu/Phe/Val dehydrogenases family. In terms of assembly, homohexamer.

The protein resides in the mitochondrion matrix. It carries out the reaction L-glutamate + NAD(+) + H2O = 2-oxoglutarate + NH4(+) + NADH + H(+). The catalysed reaction is L-glutamate + NADP(+) + H2O = 2-oxoglutarate + NH4(+) + NADPH + H(+). Subject to allosteric regulation. Activated by AMP and ADP. This chain is Glutamate dehydrogenase, mitochondrial (gluD), found in Dictyostelium discoideum (Social amoeba).